Here is a 257-residue protein sequence, read N- to C-terminus: MPLLCADIGNSHTVLGLVSGGSVLADWRVATDERNTADDWSVLLRGLLGAALEEIDGIAVCATVPAVLHEWREMLTRHFPAVRHVVVEPGVRTGVPVLMDNPREVGTDRIINALAAVHEYGGPAIVVDFGGTATTFDVVSAQGQYVGGSISPGIELSLESLGRRGAQLRKVELLRPRSVIAKNTVEALQSGMVFGVAAQVEGIVDRMIGELGVGATDVQVIATGYLAPVVLDECRCFTHHAPWLTLRGLELVFERNA.

7 to 14 contacts ATP; that stretch reads DIGNSHTV. 106 to 109 lines the substrate pocket; the sequence is GTDR. Asp-108 (proton acceptor) is an active-site residue. Asp-128 serves as a coordination point for K(+). Residue Thr-132 coordinates ATP. Thr-184 is a substrate binding site.

The protein belongs to the type III pantothenate kinase family. As to quaternary structure, homodimer. Requires NH4(+) as cofactor. K(+) serves as cofactor.

The protein localises to the cytoplasm. It carries out the reaction (R)-pantothenate + ATP = (R)-4'-phosphopantothenate + ADP + H(+). It participates in cofactor biosynthesis; coenzyme A biosynthesis; CoA from (R)-pantothenate: step 1/5. Catalyzes the phosphorylation of pantothenate (Pan), the first step in CoA biosynthesis. The protein is Type III pantothenate kinase of Nocardioides sp. (strain ATCC BAA-499 / JS614).